The chain runs to 210 residues: Redox-sensing transcriptional repressor Rex (210 aa).

The segment at residues 17–56 is a DNA-binding region (H-T-H motif); that stretch reads KYHRYLGNLMRNDVDRISSKELSEKIGFTASQIRQDLNCF. An NAD(+)-binding site is contributed by 91–96; it reads GAGNIG.

Belongs to the transcriptional regulatory Rex family. In terms of assembly, homodimer.

It is found in the cytoplasm. Modulates transcription in response to changes in cellular NADH/NAD(+) redox state. In Clostridium kluyveri (strain ATCC 8527 / DSM 555 / NBRC 12016 / NCIMB 10680 / K1), this protein is Redox-sensing transcriptional repressor Rex.